The chain runs to 301 residues: uncharacterized protein (301 aa).

Belongs to the asfivirus E301R family. Interacts with host IRF3.

Plays a role in the inhibition of host innate immune system by acting as a negatively regulator of type I interferon production. Mechanistically, interacts with and prevents host IRF3 nuclear localization to inhibit its transcriptional activity. This is an uncharacterized protein from African swine fever virus (isolate Tick/South Africa/Pretoriuskop Pr4/1996) (ASFV).